We begin with the raw amino-acid sequence, 154 residues long: Small ribosomal subunit protein uS19B (154 aa).

At Ser63 the chain carries Phosphoserine.

The protein belongs to the universal ribosomal protein uS19 family. Component of the small ribosomal subunit (SSU). Mature yeast ribosomes consist of a small (40S) and a large (60S) subunit. The 40S small subunit contains 1 molecule of ribosomal RNA (18S rRNA) and at least 33 different proteins. The large 60S subunit contains 3 rRNA molecules (25S, 5.8S and 5S rRNA) and at least 46 different proteins.

It is found in the cytoplasm. It localises to the nucleus. The protein resides in the nucleolus. Its function is as follows. Component of the ribosome, a large ribonucleoprotein complex responsible for the synthesis of proteins in the cell. The small ribosomal subunit (SSU) binds messenger RNAs (mRNAs) and translates the encoded message by selecting cognate aminoacyl-transfer RNA (tRNA) molecules. The large subunit (LSU) contains the ribosomal catalytic site termed the peptidyl transferase center (PTC), which catalyzes the formation of peptide bonds, thereby polymerizing the amino acids delivered by tRNAs into a polypeptide chain. The nascent polypeptides leave the ribosome through a tunnel in the LSU and interact with protein factors that function in enzymatic processing, targeting, and the membrane insertion of nascent chains at the exit of the ribosomal tunnel. uS19 is involved in the nuclear export of the small ribosomal subunit precursor. Has a role in the late stage of the assembly of pre-40S particles within the nucleus and controls their export to the cytoplasm. The sequence is that of Small ribosomal subunit protein uS19B (rps1502) from Schizosaccharomyces pombe (strain 972 / ATCC 24843) (Fission yeast).